We begin with the raw amino-acid sequence, 206 residues long: Small ribosomal subunit protein uS4 (206 aa).

Residues 96–156 (GRLDNVVYRM…EKSKKQARIK (61 aa)) enclose the S4 RNA-binding domain.

This sequence belongs to the universal ribosomal protein uS4 family. Part of the 30S ribosomal subunit. Contacts protein S5. The interaction surface between S4 and S5 is involved in control of translational fidelity.

One of the primary rRNA binding proteins, it binds directly to 16S rRNA where it nucleates assembly of the body of the 30S subunit. Its function is as follows. With S5 and S12 plays an important role in translational accuracy. This is Small ribosomal subunit protein uS4 from Histophilus somni (strain 2336) (Haemophilus somnus).